The following is a 274-amino-acid chain: Dermonecrotic toxin SdSicTox-betaIIB1biv (274 aa).

His-5 is a catalytic residue. Residues Glu-25 and Asp-27 each coordinate Mg(2+). Residue His-41 is the Nucleophile of the active site. 2 cysteine pairs are disulfide-bonded: Cys-45–Cys-51 and Cys-47–Cys-190. Residue Asp-85 participates in Mg(2+) binding.

It belongs to the arthropod phospholipase D family. Class II subfamily. It depends on Mg(2+) as a cofactor. In terms of tissue distribution, expressed by the venom gland.

The protein resides in the secreted. It catalyses the reaction an N-(acyl)-sphingosylphosphocholine = an N-(acyl)-sphingosyl-1,3-cyclic phosphate + choline. It carries out the reaction an N-(acyl)-sphingosylphosphoethanolamine = an N-(acyl)-sphingosyl-1,3-cyclic phosphate + ethanolamine. The enzyme catalyses a 1-acyl-sn-glycero-3-phosphocholine = a 1-acyl-sn-glycero-2,3-cyclic phosphate + choline. The catalysed reaction is a 1-acyl-sn-glycero-3-phosphoethanolamine = a 1-acyl-sn-glycero-2,3-cyclic phosphate + ethanolamine. Its function is as follows. Dermonecrotic toxins cleave the phosphodiester linkage between the phosphate and headgroup of certain phospholipids (sphingolipid and lysolipid substrates), forming an alcohol (often choline) and a cyclic phosphate. This toxin acts on sphingomyelin (SM). It may also act on ceramide phosphoethanolamine (CPE), lysophosphatidylcholine (LPC) and lysophosphatidylethanolamine (LPE), but not on lysophosphatidylserine (LPS), and lysophosphatidylglycerol (LPG). It acts by transphosphatidylation, releasing exclusively cyclic phosphate products as second products. Induces dermonecrosis, hemolysis, increased vascular permeability, edema, inflammatory response, and platelet aggregation. In Sicarius cf. damarensis (strain GJB-2008) (Six-eyed sand spider), this protein is Dermonecrotic toxin SdSicTox-betaIIB1biv.